An 86-amino-acid polypeptide reads, in one-letter code: RNA-binding protein Hfq (86 aa).

A Sm domain is found at 9–68 (DIFLNVLRRERIQVSIYLFNGIKLQGHIESFDQFVIVLKNTISQMVYKHAVSTIVPSKFV).

It belongs to the Hfq family. As to quaternary structure, homohexamer.

Functionally, RNA chaperone that binds small regulatory RNA (sRNAs) and mRNAs to facilitate mRNA translational regulation in response to envelope stress, environmental stress and changes in metabolite concentrations. Also binds with high specificity to tRNAs. The sequence is that of RNA-binding protein Hfq from Baumannia cicadellinicola subsp. Homalodisca coagulata.